Here is a 70-residue protein sequence, read N- to C-terminus: Small ribosomal subunit protein bS21B (70 aa).

This sequence belongs to the bacterial ribosomal protein bS21 family.

The polypeptide is Small ribosomal subunit protein bS21B (Burkholderia thailandensis (strain ATCC 700388 / DSM 13276 / CCUG 48851 / CIP 106301 / E264)).